A 100-amino-acid polypeptide reads, in one-letter code: Urease subunit gamma (100 aa).

This sequence belongs to the urease gamma subunit family. As to quaternary structure, heterotrimer of UreA (gamma), UreB (beta) and UreC (alpha) subunits. Three heterotrimers associate to form the active enzyme.

It is found in the cytoplasm. It carries out the reaction urea + 2 H2O + H(+) = hydrogencarbonate + 2 NH4(+). It participates in nitrogen metabolism; urea degradation; CO(2) and NH(3) from urea (urease route): step 1/1. This is Urease subunit gamma from Leptothrix cholodnii (strain ATCC 51168 / LMG 8142 / SP-6) (Leptothrix discophora (strain SP-6)).